The sequence spans 119 residues: Large ribosomal subunit protein uL18 (119 aa).

Belongs to the universal ribosomal protein uL18 family. In terms of assembly, part of the 50S ribosomal subunit; part of the 5S rRNA/L5/L18/L25 subcomplex. Contacts the 5S and 23S rRNAs.

This is one of the proteins that bind and probably mediate the attachment of the 5S RNA into the large ribosomal subunit, where it forms part of the central protuberance. The polypeptide is Large ribosomal subunit protein uL18 (Cereibacter sphaeroides (strain ATCC 17029 / ATH 2.4.9) (Rhodobacter sphaeroides)).